Here is a 409-residue protein sequence, read N- to C-terminus: Peptidase T (409 aa).

Histidine 78 lines the Zn(2+) pocket. Residue aspartate 80 is part of the active site. A Zn(2+)-binding site is contributed by aspartate 140. Catalysis depends on glutamate 174, which acts as the Proton acceptor. Glutamate 175, aspartate 197, and histidine 379 together coordinate Zn(2+).

This sequence belongs to the peptidase M20B family. Zn(2+) is required as a cofactor.

It localises to the cytoplasm. The enzyme catalyses Release of the N-terminal residue from a tripeptide.. Its function is as follows. Cleaves the N-terminal amino acid of tripeptides. This Photobacterium profundum (strain SS9) protein is Peptidase T.